We begin with the raw amino-acid sequence, 196 residues long: MYEYFEGIVTVITPSYIVVDVNGVGYKVYSPTPFAYQKGDKAKIFIEQVVRDTGITLYGFQSEDDKGLFLKLLSVSGIGPKSALAIMAAEDANSLAEAIEQGEVKYLTRFPGVGKKTASQIVLDLKGKLRDYVARLDRQDEEQGNISPALNDALLALIALGYTQKEVDRITTKLEEVNADTADQYIKKGLALLLKK.

The segment at 1-61 is domain I; it reads MYEYFEGIVT…DTGITLYGFQ (61 aa). The tract at residues 62–140 is domain II; that stretch reads SEDDKGLFLK…DYVARLDRQD (79 aa). The segment at 141-149 is flexible linker; the sequence is EEQGNISPA. The interval 149–196 is domain III; sequence ALNDALLALIALGYTQKEVDRITTKLEEVNADTADQYIKKGLALLLKK.

The protein belongs to the RuvA family. Homotetramer. Forms an RuvA(8)-RuvB(12)-Holliday junction (HJ) complex. HJ DNA is sandwiched between 2 RuvA tetramers; dsDNA enters through RuvA and exits via RuvB. An RuvB hexamer assembles on each DNA strand where it exits the tetramer. Each RuvB hexamer is contacted by two RuvA subunits (via domain III) on 2 adjacent RuvB subunits; this complex drives branch migration. In the full resolvosome a probable DNA-RuvA(4)-RuvB(12)-RuvC(2) complex forms which resolves the HJ.

It is found in the cytoplasm. The RuvA-RuvB-RuvC complex processes Holliday junction (HJ) DNA during genetic recombination and DNA repair, while the RuvA-RuvB complex plays an important role in the rescue of blocked DNA replication forks via replication fork reversal (RFR). RuvA specifically binds to HJ cruciform DNA, conferring on it an open structure. The RuvB hexamer acts as an ATP-dependent pump, pulling dsDNA into and through the RuvAB complex. HJ branch migration allows RuvC to scan DNA until it finds its consensus sequence, where it cleaves and resolves the cruciform DNA. The chain is Holliday junction branch migration complex subunit RuvA from Lactobacillus helveticus (strain DPC 4571).